Consider the following 480-residue polypeptide: Wax ester synthase/diacylglycerol acyltransferase 7 (480 aa).

At 1-193 (MTYGEEEPVS…LRSIFTIGST (193 aa)) the chain is on the cytoplasmic side. The Proton acceptor role is filled by H135. A helical membrane pass occupies residues 194–214 (MRLLWNTTIDMLLLLATVLFL). Residues 215-329 (KDTKTPLKAG…VKDSKCRWGN (115 aa)) lie on the Lumenal side of the membrane. N252 carries an N-linked (GlcNAc...) asparagine glycan. A helical membrane pass occupies residues 330–350 (YFSFIFLPFTIGLQTDPLVYL). The Cytoplasmic portion of the chain corresponds to 351-365 (KMSKSMMARKKHSYH). Residues 366–386 (AALVYFIIKIVLKVFGAKAAA) form a helical membrane-spanning segment. Over 387–480 (ELFDRPVRNT…KASLCERGLL (94 aa)) the chain is Lumenal. A glycan (N-linked (GlcNAc...) asparagine) is linked at N395.

This sequence in the N-terminal section; belongs to the long-chain O-acyltransferase family. As to expression, expressed in roots, stems, leaves, flowers and siliques.

The protein localises to the cell membrane. The protein resides in the endoplasmic reticulum membrane. It is found in the golgi apparatus membrane. The enzyme catalyses an acyl-CoA + a 1,2-diacyl-sn-glycerol = a triacyl-sn-glycerol + CoA. It catalyses the reaction a long chain fatty alcohol + a fatty acyl-CoA = a wax ester + CoA. It participates in glycerolipid metabolism; triacylglycerol biosynthesis. Its pathway is lipid metabolism. Functionally, bifunctional wax ester synthase/diacylglycerol acyltransferase that uses acyl-CoAs with 14, 16 and 18 carbons as substrates, preferably in combination with 16:0ol alcohol. Involved in cuticular wax biosynthesis. The polypeptide is Wax ester synthase/diacylglycerol acyltransferase 7 (Arabidopsis thaliana (Mouse-ear cress)).